Consider the following 223-residue polypeptide: Octanoyltransferase (223 aa).

Positions Asp32–Asp207 constitute a BPL/LPL catalytic domain. Substrate-binding positions include Arg71 to His78, Ser138 to Gly140, and Gly151 to Ala153. Residue Cys169 is the Acyl-thioester intermediate of the active site.

The protein belongs to the LipB family.

It localises to the cytoplasm. It catalyses the reaction octanoyl-[ACP] + L-lysyl-[protein] = N(6)-octanoyl-L-lysyl-[protein] + holo-[ACP] + H(+). It functions in the pathway protein modification; protein lipoylation via endogenous pathway; protein N(6)-(lipoyl)lysine from octanoyl-[acyl-carrier-protein]: step 1/2. In terms of biological role, catalyzes the transfer of endogenously produced octanoic acid from octanoyl-acyl-carrier-protein onto the lipoyl domains of lipoate-dependent enzymes. Lipoyl-ACP can also act as a substrate although octanoyl-ACP is likely to be the physiological substrate. The chain is Octanoyltransferase from Erwinia tasmaniensis (strain DSM 17950 / CFBP 7177 / CIP 109463 / NCPPB 4357 / Et1/99).